We begin with the raw amino-acid sequence, 752 residues long: Complement C2 (752 aa).

A signal peptide spans 1–20 (MGPLMVLFCLLFLYPGLADS). Sushi domains are found at residues 22-86 (PSCP…VCKP), 87-146 (VRCP…VCDN), and 149-206 (GHCP…ICRQ). 6 disulfide bridges follow: Cys24–Cys64, Cys51–Cys84, Cys89–Cys131, Cys117–Cys144, Cys151–Cys191, and Cys177–Cys204. Asn29 carries N-linked (GlcNAc...) asparagine glycosylation. N-linked (GlcNAc...) asparagine glycosylation is present at Asn112. One can recognise a VWFA domain in the interval 254 to 452 (NLYLLLDCSQ…KALHQVFEHM (199 aa)). Residues 260 to 264 (DCSQS) carry the MIDAS-like motif motif. Residues Ser262 and Ser264 each contribute to the Mg(2+) site. Asn290 and Asn333 each carry an N-linked (GlcNAc...) asparagine glycan. Position 337 (Thr337) interacts with Mg(2+). Cystine bridges form between Cys463-Cys581, Cys492-Cys508, and Cys584-Cys600. A Peptidase S1 domain is found at 464–744 (GVGNMSANAS…MQPWLRQHLG (281 aa)). 2 N-linked (GlcNAc...) asparagine glycosylation sites follow: Asn467 and Asn471. Residues His507 and Asp561 each act as charge relay system in the active site. N-linked (GlcNAc...) asparagine glycans are attached at residues Asn621 and Asn651. Cystine bridges form between Cys638/Cys665 and Cys675/Cys705. The active-site Charge relay system is Ser679.

Belongs to the peptidase S1 family. As to quaternary structure, serine protease component of the C3 convertase, also named C4bC2b, composed of the serine protease complement C2b and complement C4b. Serine protease component of the C5 convertase, also named C4bC2bC3b, composed of the serine protease complement C2b, complement C3b, as well as complement C4b. Mg(2+) is required as a cofactor. It depends on Mn(2+) as a cofactor. Cleaved and activated by different proteases depending on the complement pathway to generate complement C2a and serine protease complement C2b chains. Cleaved and activated by C1S following activation by the classical complement system. Cleaved and activated by MASP2 following activation by the lectin complement system. Cleaved and activated by GZMK following activation by the GZMK complement system.

Its subcellular location is the secreted. The protein localises to the cell surface. It carries out the reaction Selective cleavage of Arg-|-Ser bond in complement component C3 alpha-chain to form C3a and C3b, and Arg-|-Xaa bond in complement component C5 alpha-chain to form C5a and C5b.. Precursor of the catalytic component of the C3 and C5 convertase complexes, which are part of the complement pathway, a cascade of proteins that leads to phagocytosis and breakdown of pathogens and signaling that strengthens the adaptive immune system. Component C2 is part of the classical, lectin and GZMK complement systems. Its function is as follows. Catalytic component of the complement C3 and C5 convertase complexes. Following complement activation, recruited to the surface of pathogens by complement C4b opsonin to form the C3 convertase, or C3b and C4b opsonins to form the C5 convertase. As part of the C3 convertase, cleaves and activate C3 into C3a anaphylatoxin and C3b opsonin, the next components of the complement pathways. As part of the C5 convertase, cleaves and activate C5 into C5a anaphylatoxin and C5b component of the membrane attack complex. The sequence is that of Complement C2 from Pan troglodytes (Chimpanzee).